A 167-amino-acid chain; its full sequence is Insertion element IS1 4 protein InsB (167 aa).

The protein belongs to the transposase 27 family.

Its function is as follows. Absolutely required for transposition of IS1. This is Insertion element IS1 4 protein InsB (insB4) from Escherichia coli (strain K12).